The chain runs to 161 residues: MSSGHFFQGHWCDVFKCTMRCLSCTHTLSLVLCVLALTPATLEAGPETLCGAELVDTLQFVCGDRGFYFSKPTGYGPSSRRSHNRGIVDECCFQSCELRRLEMYCAPVKPGKTPRSVRAQRHTDSPRTAKKPLPGQSHSSYKEVHQKNSSRGNTGGRNYRI.

Positions 45 to 73 (GPETLCGAELVDTLQFVCGDRGFYFSKPT) are b. 3 disulfides stabilise this stretch: cysteine 50/cysteine 92, cysteine 62/cysteine 105, and cysteine 91/cysteine 96. A c region spans residues 74 to 85 (GYGPSSRRSHNR). Positions 86–106 (GIVDECCFQSCELRRLEMYCA) are a. Positions 107-114 (PVKPGKTP) are d. Residues 111 to 161 (GKTPRSVRAQRHTDSPRTAKKPLPGQSHSSYKEVHQKNSSRGNTGGRNYRI) form a disordered region. Residues 115 to 161 (RSVRAQRHTDSPRTAKKPLPGQSHSSYKEVHQKNSSRGNTGGRNYRI) constitute a propeptide, e peptide.

It belongs to the insulin family.

It is found in the secreted. The insulin-like growth factors, isolated from plasma, are structurally and functionally related to insulin but have a much higher growth-promoting activity. Acts as a ligand for IGF1R. Binds to the alpha subunit of IGF1R, leading to the activation of the intrinsic tyrosine kinase activity which autophosphorylates tyrosine residues in the beta subunit thus initiatiating a cascade of down-stream signaling events leading to activation of the PI3K-AKT/PKB and the Ras-MAPK pathways. Binds to integrins. Its binding to integrins and subsequent ternary complex formation with integrins and IGFR1 are essential for IGF1 signaling. The protein is Insulin-like growth factor 1, juvenile form of Cyprinus carpio (Common carp).